Consider the following 165-residue polypeptide: 3-isopropylmalate dehydratase small subunit (165 aa).

The protein belongs to the LeuD family. LeuD type 2 subfamily. In terms of assembly, heterodimer of LeuC and LeuD.

The catalysed reaction is (2R,3S)-3-isopropylmalate = (2S)-2-isopropylmalate. It functions in the pathway amino-acid biosynthesis; L-leucine biosynthesis; L-leucine from 3-methyl-2-oxobutanoate: step 2/4. Functionally, catalyzes the isomerization between 2-isopropylmalate and 3-isopropylmalate, via the formation of 2-isopropylmaleate. This is 3-isopropylmalate dehydratase small subunit from Saccharolobus islandicus (strain Y.N.15.51 / Yellowstone #2) (Sulfolobus islandicus).